The chain runs to 387 residues: Zinc finger protein neuro-d4 (387 aa).

Residues Lys-106, Lys-129, and Lys-133 each participate in a glycyl lysine isopeptide (Lys-Gly) (interchain with G-Cter in SUMO2) cross-link. The C2H2-type zinc finger occupies 195-218 (YVCDICGKRYKNRPGLSYHYTHTH). PHD-type zinc fingers lie at residues 271–328 (NGYC…CKSC) and 325–375 (CKSC…CLRH). Positions 274, 277, 293, 296, 301, 304, 322, 325, 328, 331, 343, 346, 351, 354, 369, and 372 each coordinate Zn(2+).

The protein belongs to the requiem/DPF family. Component of neuron-specific chromatin remodeling complex (nBAF complex) composed of at least, ARID1A/BAF250A or ARID1B/BAF250B, SMARCD1/BAF60A, SMARCD3/BAF60C, SMARCA2/BRM/BAF190B, SMARCA4/BRG1/BAF190A, SMARCB1/BAF47, SMARCC1/BAF155, SMARCE1/BAF57, SMARCC2/BAF170, DPF1/BAF45B, DPF3/BAF45C, ACTL6B/BAF53B and actin.

It localises to the cytoplasm. The protein localises to the nucleus. May have an important role in developing neurons by participating in regulation of cell survival, possibly as a neurospecific transcription factor. Belongs to the neuron-specific chromatin remodeling complex (nBAF complex). During neural development a switch from a stem/progenitor to a postmitotic chromatin remodeling mechanism occurs as neurons exit the cell cycle and become committed to their adult state. The transition from proliferating neural stem/progenitor cells to postmitotic neurons requires a switch in subunit composition of the npBAF and nBAF complexes. As neural progenitors exit mitosis and differentiate into neurons, npBAF complexes which contain ACTL6A/BAF53A and PHF10/BAF45A, are exchanged for homologous alternative ACTL6B/BAF53B and DPF1/BAF45B or DPF3/BAF45C subunits in neuron-specific complexes (nBAF). The npBAF complex is essential for the self-renewal/proliferative capacity of the multipotent neural stem cells. The nBAF complex along with CREST plays a role regulating the activity of genes essential for dendrite growth. In Homo sapiens (Human), this protein is Zinc finger protein neuro-d4.